A 203-amino-acid chain; its full sequence is Lipoprotein MlpJ (203 aa).

The N-terminal stretch at 1 to 17 (MKIINILFCISLLLLNS) is a signal peptide. Cysteine 18 carries N-palmitoyl cysteine lipidation. Residue cysteine 18 is the site of S-diacylglycerol cysteine attachment. The tract at residues 26–47 (LKNNAQQTKSRKKRDLSQEELP) is disordered.

Belongs to the Multicopy lipoprotein (Mlp) family.

It is found in the cell outer membrane. Its function is as follows. An outer membrane protein that may participate in pathogenesis. Some human Lyme disease patients have antibodies against this protein. The Mlp proteins probably undergo intragenic recombination, generating new alleles. The sequence is that of Lipoprotein MlpJ from Borreliella burgdorferi (strain ATCC 35210 / DSM 4680 / CIP 102532 / B31) (Borrelia burgdorferi).